The sequence spans 312 residues: Glyoxylate/hydroxypyruvate reductase A (312 aa).

Residue Arg-227 is part of the active site. The active-site Proton donor is the His-275.

This sequence belongs to the D-isomer specific 2-hydroxyacid dehydrogenase family. GhrA subfamily.

Its subcellular location is the cytoplasm. It catalyses the reaction glycolate + NADP(+) = glyoxylate + NADPH + H(+). The enzyme catalyses (R)-glycerate + NAD(+) = 3-hydroxypyruvate + NADH + H(+). The catalysed reaction is (R)-glycerate + NADP(+) = 3-hydroxypyruvate + NADPH + H(+). Its function is as follows. Catalyzes the NADPH-dependent reduction of glyoxylate and hydroxypyruvate into glycolate and glycerate, respectively. The protein is Glyoxylate/hydroxypyruvate reductase A of Salmonella agona (strain SL483).